The chain runs to 120 residues: Large ribosomal subunit protein uL18 (120 aa).

This sequence belongs to the universal ribosomal protein uL18 family. Part of the 50S ribosomal subunit; part of the 5S rRNA/L5/L18/L25 subcomplex. Contacts the 5S and 23S rRNAs.

Its function is as follows. This is one of the proteins that bind and probably mediate the attachment of the 5S RNA into the large ribosomal subunit, where it forms part of the central protuberance. This Bacillus cereus (strain G9842) protein is Large ribosomal subunit protein uL18.